We begin with the raw amino-acid sequence, 414 residues long: Imidazolonepropionase (414 aa).

Residues His-73 and His-75 each contribute to the Fe(3+) site. Residues His-73 and His-75 each coordinate Zn(2+). 4-imidazolone-5-propanoate is bound by residues Arg-82, Tyr-145, and His-178. Residue Tyr-145 coordinates N-formimidoyl-L-glutamate. Position 249 (His-249) interacts with Fe(3+). Residue His-249 coordinates Zn(2+). Residue Gln-252 coordinates 4-imidazolone-5-propanoate. Fe(3+) is bound at residue Asp-324. A Zn(2+)-binding site is contributed by Asp-324. Residues Asn-326 and Gly-328 each coordinate N-formimidoyl-L-glutamate. Ser-329 lines the 4-imidazolone-5-propanoate pocket.

The protein belongs to the metallo-dependent hydrolases superfamily. HutI family. Zn(2+) is required as a cofactor. Requires Fe(3+) as cofactor.

The protein localises to the cytoplasm. It catalyses the reaction 4-imidazolone-5-propanoate + H2O = N-formimidoyl-L-glutamate. Its pathway is amino-acid degradation; L-histidine degradation into L-glutamate; N-formimidoyl-L-glutamate from L-histidine: step 3/3. Functionally, catalyzes the hydrolytic cleavage of the carbon-nitrogen bond in imidazolone-5-propanoate to yield N-formimidoyl-L-glutamate. It is the third step in the universal histidine degradation pathway. The chain is Imidazolonepropionase from Shewanella pealeana (strain ATCC 700345 / ANG-SQ1).